A 153-amino-acid polypeptide reads, in one-letter code: Transcriptional repressor NrdR (153 aa).

The segment at 3-34 (CPYCNADDTKVIDSRLAAEGAQVRRRRQCNQC) is a zinc-finger region. An ATP-cone domain is found at 49–139 (PRIIKSNGRI…VYRDFQDIEA (91 aa)).

It belongs to the NrdR family. It depends on Zn(2+) as a cofactor.

Negatively regulates transcription of bacterial ribonucleotide reductase nrd genes and operons by binding to NrdR-boxes. The chain is Transcriptional repressor NrdR from Psychrobacter sp. (strain PRwf-1).